The primary structure comprises 389 residues: tRNA (cytosine(72)-C(5))-methyltransferase (389 aa).

The PUA domain maps to 92–167; it reads LPVVVANKYA…LAVEVTLPKF (76 aa). S-adenosyl-L-methionine is bound by residues 209-215, Asp-233, Arg-238, Asp-260, Asp-277, and Tyr-304; that span reads AAAPGGK. Residue Cys-327 is the Nucleophile of the active site.

It belongs to the class I-like SAM-binding methyltransferase superfamily. RsmB/NOP family.

The catalysed reaction is cytidine(72) in tRNA + S-adenosyl-L-methionine = 5-methylcytidine(72) in tRNA + S-adenosyl-L-homocysteine + H(+). It carries out the reaction cytidine(72) in tRNA(Thr) + S-adenosyl-L-methionine = 5-methylcytidine(72) in tRNA(Thr) + S-adenosyl-L-homocysteine + H(+). It catalyses the reaction cytidine(72) in tRNA(Cys) + S-adenosyl-L-methionine = 5-methylcytidine(72) in tRNA(Cys) + S-adenosyl-L-homocysteine + H(+). S-adenosyl-L-methionine-dependent methyltransferase that specifically methylates the C5 position of cytosine 72 in several tRNAs. This modification appears to slightly promote the thermal stability of P.horikoshii tRNAs, but does not affect their amino acid accepting activity. Four elements in the acceptor stems of tRNAs are essential for substrate recognition by this enzyme: the target site C72, the 3'-CCA terminus, U73 or G73, and the second base pair C2:G71. The polypeptide is tRNA (cytosine(72)-C(5))-methyltransferase (Pyrococcus horikoshii (strain ATCC 700860 / DSM 12428 / JCM 9974 / NBRC 100139 / OT-3)).